The sequence spans 326 residues: Putative ribose-phosphate pyrophosphokinase 2 (326 aa).

Residues 43 to 45 (DGE) and 102 to 103 (RQ) each bind ATP. His-136 is a Mg(2+) binding site. Residues Asp-225 and 229-233 (NTGKT) contribute to the D-ribose 5-phosphate site.

It belongs to the ribose-phosphate pyrophosphokinase family. Class I subfamily. In terms of assembly, homohexamer. The cofactor is Mg(2+).

The protein resides in the cytoplasm. It catalyses the reaction D-ribose 5-phosphate + ATP = 5-phospho-alpha-D-ribose 1-diphosphate + AMP + H(+). The protein operates within metabolic intermediate biosynthesis; 5-phospho-alpha-D-ribose 1-diphosphate biosynthesis; 5-phospho-alpha-D-ribose 1-diphosphate from D-ribose 5-phosphate (route I): step 1/1. Involved in the biosynthesis of the central metabolite phospho-alpha-D-ribosyl-1-pyrophosphate (PRPP) via the transfer of pyrophosphoryl group from ATP to 1-hydroxyl of ribose-5-phosphate (Rib-5-P). The protein is Putative ribose-phosphate pyrophosphokinase 2 of Streptococcus pyogenes serotype M3 (strain SSI-1).